Reading from the N-terminus, the 118-residue chain is Basic phospholipase A2 homolog 1 (118 aa).

Intrachain disulfides connect Cys-11–Cys-71, Cys-27–Cys-117, Cys-29–Cys-45, Cys-44–Cys-98, Cys-51–Cys-91, Cys-60–Cys-84, and Cys-78–Cys-89. The important for membrane-damaging activities in eukaryotes and bacteria; heparin-binding stretch occupies residues 106 to 118; it reads NKNFNIDTKKRCK.

Belongs to the phospholipase A2 family. Group I subfamily. D49 sub-subfamily. In terms of tissue distribution, expressed by the venom gland.

It is found in the secreted. The polypeptide is Basic phospholipase A2 homolog 1 (Laticauda colubrina (Yellow-lipped sea krait)).